Reading from the N-terminus, the 331-residue chain is uncharacterized protein (331 aa).

5 consecutive Pentapeptide repeat domains span residues 50–89 (ENLQ…RLGH), 90–129 (CQMN…NFKG), 140–179 (ANLR…NLQE), 185–224 (ANLR…KLTG), and 230–269 (TNLS…NLTQ).

This is an uncharacterized protein from Synechocystis sp. (strain ATCC 27184 / PCC 6803 / Kazusa).